The chain runs to 437 residues: Type II methyltransferase M.HgiBI (437 aa).

The 428-residue stretch at 4–431 (FRFIDLFAGI…KALQCVKLFE (428 aa)) folds into the SAM-dependent MTase C5-type domain. The active site involves cysteine 75.

The protein belongs to the class I-like SAM-binding methyltransferase superfamily. C5-methyltransferase family.

It carries out the reaction a 2'-deoxycytidine in DNA + S-adenosyl-L-methionine = a 5-methyl-2'-deoxycytidine in DNA + S-adenosyl-L-homocysteine + H(+). In terms of biological role, a methylase that recognizes the double-stranded sequence 5'-GGWCC-3', methylates C-? on both strands, and protects the DNA from cleavage by the HgiBI endonuclease. This system is less active than isoschizomeric RM.HgiEI. This is Type II methyltransferase M.HgiBI from Herpetosiphon aurantiacus (Herpetosiphon giganteus).